The following is a 203-amino-acid chain: GTP cyclohydrolase-2 (203 aa).

49 to 53 contacts GTP; sequence RIHSE. Zn(2+) contacts are provided by C54, C65, and C67. Residues Q70, 92–94, and T114 contribute to the GTP site; that span reads EGR. D126 serves as the catalytic Proton acceptor. R128 functions as the Nucleophile in the catalytic mechanism. Residues T149 and K154 each coordinate GTP.

Belongs to the GTP cyclohydrolase II family. It depends on Zn(2+) as a cofactor.

It carries out the reaction GTP + 4 H2O = 2,5-diamino-6-hydroxy-4-(5-phosphoribosylamino)-pyrimidine + formate + 2 phosphate + 3 H(+). Its pathway is cofactor biosynthesis; riboflavin biosynthesis; 5-amino-6-(D-ribitylamino)uracil from GTP: step 1/4. Its function is as follows. Catalyzes the conversion of GTP to 2,5-diamino-6-ribosylamino-4(3H)-pyrimidinone 5'-phosphate (DARP), formate and pyrophosphate. The protein is GTP cyclohydrolase-2 of Shewanella sp. (strain W3-18-1).